A 154-amino-acid chain; its full sequence is Prefoldin subunit 2 (154 aa).

Disordered regions lie at residues Met-1–Ala-20 and Leu-126–Ser-154. Residues Gly-9–Lys-18 are compositionally biased toward gly residues. Basic and acidic residues predominate over residues Leu-126–Ser-139. The segment covering Glu-140–Ser-154 has biased composition (low complexity).

It belongs to the prefoldin subunit beta family. As to quaternary structure, heterohexamer of two PFD-alpha type and four PFD-beta type subunits. Component of the PAQosome complex which is responsible for the biogenesis of several protein complexes and which consists of R2TP complex members RUVBL1, RUVBL2, RPAP3 and PIH1D1, URI complex members PFDN2, PFDN6, PDRG1, UXT and URI1 as well as ASDURF, POLR2E and DNAAF10/WDR92. Interacts with URI1; the interaction is phosphorylation-dependent and occurs in a growth-dependent manner.

It is found in the nucleus. It localises to the cytoplasm. The protein localises to the mitochondrion. In terms of biological role, binds specifically to cytosolic chaperonin (c-CPN) and transfers target proteins to it. Binds to nascent polypeptide chain and promotes folding in an environment in which there are many competing pathways for nonnative proteins. This chain is Prefoldin subunit 2 (Pfdn2), found in Mus musculus (Mouse).